We begin with the raw amino-acid sequence, 919 residues long: uncharacterized protein (919 aa).

Residues 1-15 (MEALILLSSQQSGSI) are compositionally biased toward low complexity. Disordered stretches follow at residues 1 to 167 (MEAL…DLEN), 179 to 312 (RFKP…STPS), 415 to 491 (HIYE…RLSL), 553 to 739 (QQQQ…TIKP), 751 to 863 (THNE…NNII), and 883 to 906 (LNIN…DHIN). Positions 16–25 (KNNCASTSDI) are enriched in polar residues. Composition is skewed to low complexity over residues 34–75 (IVIV…SSSS), 96–107 (SSPSSSPNTPKT), and 141–153 (TPTT…TPIK). Residues 154-167 (PVKDPKEKEKDLEN) are compositionally biased toward basic and acidic residues. The segment covering 186–292 (NNTNNNNNIN…QQSSPTSSQT (107 aa)) has biased composition (low complexity). The segment covering 420-433 (PNENNNGGSFQKPN) has biased composition (polar residues). 4 stretches are compositionally biased toward low complexity: residues 450-471 (GVSG…PSHP), 553-564 (QQQQQQQQQSSS), 573-589 (SQPQ…QTPQ), and 618-635 (HMPQ…MPHS). Polar residues predominate over residues 678–695 (YGSSPNLNGGKGSNNFLQ). Residues 712 to 723 (SSVDSYSNSSPT) show a composition bias toward low complexity. A compositionally biased stretch (polar residues) spans 754–768 (ENYMSSPRQPLSPHN). Residues 785–797 (PHEHCNYIDKNDE) are compositionally biased toward basic and acidic residues. Over residues 798–863 (YYSNNNNNNN…NNNNNNNNII (66 aa)) the composition is skewed to low complexity. Over residues 883-899 (LNINHQDGPNSASSTPR) the composition is skewed to polar residues.

This is an uncharacterized protein from Dictyostelium discoideum (Social amoeba).